Consider the following 559-residue polypeptide: DNA ligase (559 aa).

Glu-247 contributes to the ATP binding site. Lys-249 serves as the catalytic N6-AMP-lysine intermediate. ATP is bound by residues Arg-254, Arg-269, Glu-299, Phe-339, Arg-414, and Lys-420.

Belongs to the ATP-dependent DNA ligase family. The cofactor is Mg(2+).

It carries out the reaction ATP + (deoxyribonucleotide)n-3'-hydroxyl + 5'-phospho-(deoxyribonucleotide)m = (deoxyribonucleotide)n+m + AMP + diphosphate.. In terms of biological role, DNA ligase that seals nicks in double-stranded DNA during DNA replication, DNA recombination and DNA repair. The polypeptide is DNA ligase (Pyrococcus abyssi (strain GE5 / Orsay)).